Consider the following 77-residue polypeptide: Defensin-like protein 4 (77 aa).

The N-terminal stretch at 1–30 (MKFSMRLISAVLFLVMIFVATGMGPVTVEA) is a signal peptide. Disulfide bonds link C33-C77, C44-C64, C50-C71, and C54-C73.

Belongs to the DEFL family. As to expression, expressed in roots, siliques and seeds.

Its subcellular location is the secreted. In terms of biological role, confers broad-spectrum resistance to pathogens. The protein is Defensin-like protein 4 (PDF2.1) of Arabidopsis thaliana (Mouse-ear cress).